The primary structure comprises 567 residues: 2-succinyl-5-enolpyruvyl-6-hydroxy-3-cyclohexene-1-carboxylate synthase (567 aa).

This sequence belongs to the TPP enzyme family. MenD subfamily. Homodimer. The cofactor is Mg(2+). Mn(2+) serves as cofactor. It depends on thiamine diphosphate as a cofactor.

It carries out the reaction isochorismate + 2-oxoglutarate + H(+) = 5-enolpyruvoyl-6-hydroxy-2-succinyl-cyclohex-3-ene-1-carboxylate + CO2. The protein operates within quinol/quinone metabolism; 1,4-dihydroxy-2-naphthoate biosynthesis; 1,4-dihydroxy-2-naphthoate from chorismate: step 2/7. It participates in quinol/quinone metabolism; menaquinone biosynthesis. Its function is as follows. Catalyzes the thiamine diphosphate-dependent decarboxylation of 2-oxoglutarate and the subsequent addition of the resulting succinic semialdehyde-thiamine pyrophosphate anion to isochorismate to yield 2-succinyl-5-enolpyruvyl-6-hydroxy-3-cyclohexene-1-carboxylate (SEPHCHC). This Yersinia pestis bv. Antiqua (strain Angola) protein is 2-succinyl-5-enolpyruvyl-6-hydroxy-3-cyclohexene-1-carboxylate synthase.